The following is an 82-amino-acid chain: uncharacterized protein (82 aa).

The region spanning 1-82 is the 2Fe-2S ferredoxin-type domain; sequence MKIHLIRHNT…HVESDIEIDL (82 aa). [2Fe-2S] cluster-binding residues include cysteine 35, cysteine 40, cysteine 43, and cysteine 72.

Requires [2Fe-2S] cluster as cofactor.

This is an uncharacterized protein from Haemophilus influenzae (strain ATCC 51907 / DSM 11121 / KW20 / Rd).